Here is a 777-residue protein sequence, read N- to C-terminus: Phosphoribosylformylglycinamidine synthase subunit PurL (777 aa).

His-50 is an active-site residue. Tyr-53 and Lys-92 together coordinate ATP. Mg(2+) is bound at residue Glu-94. Substrate-binding positions include 95–98 (SHNH) and Arg-117. The active-site Proton acceptor is His-96. Mg(2+) is bound at residue Asp-118. A substrate-binding site is contributed by Gln-241. Asp-269 is a Mg(2+) binding site. Residue 313–315 (ESQ) coordinates substrate. Positions 516 and 553 each coordinate ATP. Asn-554 lines the Mg(2+) pocket. Substrate is bound at residue Ser-556.

It belongs to the FGAMS family. Monomer. Part of the FGAM synthase complex composed of 1 PurL, 1 PurQ and 2 PurS subunits.

It localises to the cytoplasm. The catalysed reaction is N(2)-formyl-N(1)-(5-phospho-beta-D-ribosyl)glycinamide + L-glutamine + ATP + H2O = 2-formamido-N(1)-(5-O-phospho-beta-D-ribosyl)acetamidine + L-glutamate + ADP + phosphate + H(+). Its pathway is purine metabolism; IMP biosynthesis via de novo pathway; 5-amino-1-(5-phospho-D-ribosyl)imidazole from N(2)-formyl-N(1)-(5-phospho-D-ribosyl)glycinamide: step 1/2. In terms of biological role, part of the phosphoribosylformylglycinamidine synthase complex involved in the purines biosynthetic pathway. Catalyzes the ATP-dependent conversion of formylglycinamide ribonucleotide (FGAR) and glutamine to yield formylglycinamidine ribonucleotide (FGAM) and glutamate. The FGAM synthase complex is composed of three subunits. PurQ produces an ammonia molecule by converting glutamine to glutamate. PurL transfers the ammonia molecule to FGAR to form FGAM in an ATP-dependent manner. PurS interacts with PurQ and PurL and is thought to assist in the transfer of the ammonia molecule from PurQ to PurL. The polypeptide is Phosphoribosylformylglycinamidine synthase subunit PurL (Synechococcus elongatus (strain ATCC 33912 / PCC 7942 / FACHB-805) (Anacystis nidulans R2)).